The primary structure comprises 124 residues: Large ribosomal subunit protein bL12 (124 aa).

It belongs to the bacterial ribosomal protein bL12 family. In terms of assembly, homodimer. Part of the ribosomal stalk of the 50S ribosomal subunit. Forms a multimeric L10(L12)X complex, where L10 forms an elongated spine to which 2 to 4 L12 dimers bind in a sequential fashion. Binds GTP-bound translation factors.

In terms of biological role, forms part of the ribosomal stalk which helps the ribosome interact with GTP-bound translation factors. Is thus essential for accurate translation. This Herminiimonas arsenicoxydans protein is Large ribosomal subunit protein bL12.